We begin with the raw amino-acid sequence, 688 residues long: Sodium channel and clathrin linker 1 (688 aa).

A2 is modified (N-acetylalanine). Coiled-coil stretches lie at residues 59–108 (LIAE…AVEK) and 152–673 (QTAS…SVIT). S681 carries the post-translational modification Phosphoserine.

In terms of assembly, interacts with SCN10A and clathrin. Identified in a complex containing SCN10A, clathrin and SCLT1.

The protein localises to the cytoplasm. The protein resides in the cytoskeleton. Its subcellular location is the microtubule organizing center. It localises to the centrosome. It is found in the centriole. Its function is as follows. Adapter protein that links SCN10A to clathrin. Regulates SCN10A channel activity, possibly by promoting channel internalization. The sequence is that of Sodium channel and clathrin linker 1 (Sclt1) from Mus musculus (Mouse).